The following is a 416-amino-acid chain: Exodeoxyribonuclease 7 large subunit (416 aa).

It belongs to the XseA family. As to quaternary structure, heterooligomer composed of large and small subunits.

Its subcellular location is the cytoplasm. The catalysed reaction is Exonucleolytic cleavage in either 5'- to 3'- or 3'- to 5'-direction to yield nucleoside 5'-phosphates.. Its function is as follows. Bidirectionally degrades single-stranded DNA into large acid-insoluble oligonucleotides, which are then degraded further into small acid-soluble oligonucleotides. This is Exodeoxyribonuclease 7 large subunit from Acidothermus cellulolyticus (strain ATCC 43068 / DSM 8971 / 11B).